The following is a 303-amino-acid chain: S-methyl-5'-thioadenosine phosphorylase 1 (303 aa).

Phosphate-binding positions include S14, 57 to 58 (RH), and 90 to 91 (SA). M198 serves as a coordination point for substrate. S199 lines the phosphate pocket. 222–224 (DYD) contributes to the substrate binding site.

The protein belongs to the PNP/MTAP phosphorylase family. MTAP subfamily. Homotrimer.

The protein localises to the cytoplasm. It localises to the nucleus. It carries out the reaction S-methyl-5'-thioadenosine + phosphate = 5-(methylsulfanyl)-alpha-D-ribose 1-phosphate + adenine. The protein operates within amino-acid biosynthesis; L-methionine biosynthesis via salvage pathway; S-methyl-5-thio-alpha-D-ribose 1-phosphate from S-methyl-5'-thioadenosine (phosphorylase route): step 1/1. In terms of biological role, catalyzes the reversible phosphorylation of S-methyl-5'-thioadenosine (MTA) to adenine and 5-methylthioribose-1-phosphate. Involved in the breakdown of MTA, a major by-product of polyamine biosynthesis. Responsible for the first step in the methionine salvage pathway after MTA has been generated from S-adenosylmethionine. Has broad substrate specificity with 6-aminopurine nucleosides as preferred substrates. This is S-methyl-5'-thioadenosine phosphorylase 1 from Puccinia graminis f. sp. tritici (strain CRL 75-36-700-3 / race SCCL) (Black stem rust fungus).